The sequence spans 5125 residues: Usherin (5125 aa).

Positions 1 to 33 (MYYLALSSGFLGQAIKTSILAYLASVLLAASQG) are cleaved as a signal peptide. Residues Asn120, Asn229, Asn257, Asn273, Asn414, Asn447, and Asn468 are each glycosylated (N-linked (GlcNAc...) asparagine). A Laminin N-terminal domain is found at 273–513 (NVSLTNREIL…AVDEITIIGR (241 aa)). Intrachain disulfides connect Cys514–Cys523, Cys516–Cys532, Cys534–Cys545, Cys548–Cys568, Cys571–Cys580, Cys573–Cys601, Cys604–Cys613, Cys616–Cys634, Cys637–Cys651, Cys639–Cys658, Cys660–Cys669, Cys672–Cys687, Cys690–Cys704, Cys692–Cys711, Cys713–Cys722, Cys725–Cys740, Cys743–Cys755, Cys745–Cys762, Cys764–Cys773, Cys776–Cys788, Cys791–Cys804, Cys793–Cys811, Cys813–Cys822, Cys825–Cys840, Cys843–Cys857, Cys845–Cys864, Cys866–Cys875, Cys878–Cys893, Cys896–Cys909, Cys898–Cys916, Cys918–Cys927, Cys930–Cys944, Cys947–Cys959, Cys949–Cys966, Cys981–Cys995, Cys998–Cys1010, Cys1000–Cys1017, Cys1019–Cys1028, and Cys1031–Cys1046. Laminin EGF-like domains are found at residues 514–570 (CQCH…NCKP), 571–636 (CQCH…VCKH), 637–689 (CDCN…CCRP), 690–742 (CDCN…GCEP), 743–790 (CHCN…ACEV), 791–842 (CDCN…LCLP), 843–895 (CNCE…GCQA), 896–946 (CDCD…GCLP), 947–997 (CLCH…RCRP), and 998–1048 (CHCH…ACSK). A glycan (N-linked (GlcNAc...) asparagine) is linked at Asn646. 2 N-linked (GlcNAc...) asparagine glycosylation sites follow: Asn835 and Asn852. An N-linked (GlcNAc...) asparagine glycan is attached at Asn884. Asn940 carries an N-linked (GlcNAc...) asparagine glycan. N-linked (GlcNAc...) asparagine glycosylation occurs at Asn1007. 4 Fibronectin type-III domains span residues 1054–1142 (PPPR…TKPE), 1146–1240 (GHLN…APPQ), 1241–1356 (RQEP…SAPV), and 1357–1461 (FMAA…AAPA). Asn1067, Asn1149, Asn1170, Asn1221, Asn1304, and Asn1381 each carry an N-linked (GlcNAc...) asparagine glycan. Laminin G-like domains are found at residues 1510–1697 (TKGT…WEGC) and 1702–1879 (EEGV…QDGC). 2 disulfides stabilise this stretch: Cys1660/Cys1697 and Cys1850/Cys1879. Fibronectin type-III domains follow at residues 1857–1943 (TRGA…SAPH), 1945–2042 (VPTP…TPQE), 2043–2132 (APQE…LPPE), 2133–2230 (RVDP…TVPE), 2231–2318 (GVPA…APPE), 2319–2421 (GTVN…MPPG), 2425–2519 (GLLS…TTED), 2520–2613 (KPGP…TPEG), 2614–2709 (IPGP…TRPS), 2713–2806 (GVQP…THPA), 2807–2910 (LPQE…TLAG), 2914–3005 (RGAT…TWEE), 3009–3099 (GMRP…TPSG), 3380–3485 (ATEE…TRED), 3486–3577 (VPQG…TRGV), 3580–3670 (SVPP…AAPQ), 3672–3762 (VWVT…TPED), 3765–3852 (PPCN…TLEA), 3853–3950 (APVG…TLEA), 3951–4054 (PPQD…SAPS), 4055–4143 (GLMN…APPD), 4144–4251 (SQMA…APPD), 4252–4344 (GLSP…ASPA), 4345–4432 (GVSP…APPE), 4433–4517 (DMDP…TSPS), 4518–4620 (APSG…IPPL), 4625–4720 (PHLE…TGPA), 4721–4813 (PPEG…THPA), and 4814–4916 (PPSG…TKKE). Residues 1930 to 1950 (SDWSRGRTLGSAPHSVPTPSR) form a disordered region.

In terms of assembly, interacts with collagen IV and fibronectin via its laminin EGF-like domains. Interaction with collagen may be required for stable integration into the basement membrane. Interacts with NINL. Interacts with USH1C. Interacts (via the cytoplasmic region) with PDZD7. Component of USH2 complex, composed of ADGRV1, PDZD7, USH2A and WHRN. Interacts with ADGRV1/MASS1 (via N-terminal PDZ domain). Interacts (via the cytoplasmic region) with WHRN. Interacts (via the cytoplasmic region) with VEZT and MYO7A (via MyTH4-FERM domains); the interaction associates VEZT with the USH2 complex at the stereocilia base. As to expression, present in the synaptic terminals of inner ear hair cells (at protein level). Predominantly expressed in the retina and cochlea. Weakly expressed in brain and kidney. Detectable from E17 in the neural epithelium, but not in the retinal pigment epithelium (RPE) of the developing retina. After birth, it is expressed at P7 and remains expressed during adulthood.

The protein resides in the secreted. The protein localises to the cell projection. It localises to the stereocilium membrane. Its subcellular location is the photoreceptor inner segment. In terms of biological role, involved in hearing and vision as member of the USH2 complex. In the inner ear, required for the hair bundle ankle formation, which connects growing stereocilia in developing cochlear hair cells. In retina photoreceptors, the USH2 complex is required for the maintenance of periciliary membrane complex that seems to play a role in regulating intracellular protein transport. The protein is Usherin (Ush2a) of Rattus norvegicus (Rat).